Reading from the N-terminus, the 848-residue chain is Adenylate cyclase (848 aa).

Residues 1-535 (MYLYIETLKQ…DVSHHFPLRL (535 aa)) are catalytic. A regulatory region spans residues 541–848 (KALYSPCEIR…DTPLLQQYFS (308 aa)). Residue histidine 609 is modified to Phosphohistidine; by CRR.

The protein belongs to the adenylyl cyclase class-1 family.

The protein resides in the cytoplasm. It catalyses the reaction ATP = 3',5'-cyclic AMP + diphosphate. In Escherichia coli O157:H7, this protein is Adenylate cyclase (cyaA).